Reading from the N-terminus, the 220-residue chain is Ribonuclease HII (220 aa).

Residues 27-220 enclose the RNase H type-2 domain; sequence CIIVGVDEVG…SKISYMFKNS (194 aa). Aspartate 33, glutamate 34, and aspartate 128 together coordinate a divalent metal cation.

Belongs to the RNase HII family. It depends on Mn(2+) as a cofactor. The cofactor is Mg(2+).

It is found in the cytoplasm. It carries out the reaction Endonucleolytic cleavage to 5'-phosphomonoester.. Functionally, endonuclease that specifically degrades the RNA of RNA-DNA hybrids. This is Ribonuclease HII from Ehrlichia ruminantium (strain Gardel).